We begin with the raw amino-acid sequence, 594 residues long: Aspartate--tRNA(Asp/Asn) ligase (594 aa).

Residue E173 participates in L-aspartate binding. The segment at 197-200 (QLFK) is aspartate. L-aspartate is bound at residue R219. Residues 219 to 221 (RDE) and Q228 contribute to the ATP site. L-aspartate is bound at residue H451. E485 is an ATP binding site. R492 contributes to the L-aspartate binding site. ATP is bound at residue 537 to 540 (GWDR). The interval 566 to 594 (PLTDAPAPITAQQRKESGIDAQPKRVQQA) is disordered.

Belongs to the class-II aminoacyl-tRNA synthetase family. Type 1 subfamily. Homodimer.

It is found in the cytoplasm. The enzyme catalyses tRNA(Asx) + L-aspartate + ATP = L-aspartyl-tRNA(Asx) + AMP + diphosphate. Functionally, aspartyl-tRNA synthetase with relaxed tRNA specificity since it is able to aspartylate not only its cognate tRNA(Asp) but also tRNA(Asn). Reaction proceeds in two steps: L-aspartate is first activated by ATP to form Asp-AMP and then transferred to the acceptor end of tRNA(Asp/Asn). The sequence is that of Aspartate--tRNA(Asp/Asn) ligase from Mycobacterium tuberculosis (strain CDC 1551 / Oshkosh).